Reading from the N-terminus, the 516-residue chain is Phosphatidylserine decarboxylase proenzyme 2, mitochondrial (516 aa).

A mitochondrion-targeting transit peptide spans 1–21; the sequence is MRPRQRFRRFHPRWSKVNLRG. Over 22-33 the chain is Mitochondrial matrix; it reads FGGVGALKGVKA. Residues 34-52 form a helical membrane-spanning segment; it reads LNGMNVRVSMRLKWISNRI. Residues 53–516 lie on the Mitochondrial intermembrane side of the membrane; the sequence is HRIRRSRRLG…GQYVRVGEAL (464 aa). Active-site charge relay system; for autoendoproteolytic cleavage activity residues include aspartate 159, histidine 373, and serine 488. Serine 488 (schiff-base intermediate with substrate; via pyruvic acid; for decarboxylase activity) is an active-site residue. Serine 488 is modified (pyruvic acid (Ser); by autocatalysis).

Belongs to the phosphatidylserine decarboxylase family. PSD-B subfamily. Eukaryotic type I sub-subfamily. Heterodimer of a large membrane-associated beta subunit and a small pyruvoyl-containing alpha subunit. Requires pyruvate as cofactor. In terms of processing, is synthesized initially as an inactive proenzyme. Formation of the active enzyme involves a self-maturation process in which the active site pyruvoyl group is generated from an internal serine residue via an autocatalytic post-translational modification. Two non-identical subunits are generated from the proenzyme in this reaction, and the pyruvate is formed at the N-terminus of the alpha chain, which is derived from the carboxyl end of the proenzyme. The autoendoproteolytic cleavage occurs by a canonical serine protease mechanism, in which the side chain hydroxyl group of the serine supplies its oxygen atom to form the C-terminus of the beta chain, while the remainder of the serine residue undergoes an oxidative deamination to produce ammonia and the pyruvoyl prosthetic group on the alpha chain. During this reaction, the Ser that is part of the protease active site of the proenzyme becomes the pyruvoyl prosthetic group, which constitutes an essential element of the active site of the mature decarboxylase.

It localises to the mitochondrion. It is found in the mitochondrion inner membrane. The protein localises to the nucleus envelope. The protein resides in the lipid droplet. Its subcellular location is the endoplasmic reticulum membrane. It carries out the reaction a 1,2-diacyl-sn-glycero-3-phospho-L-serine + H(+) = a 1,2-diacyl-sn-glycero-3-phosphoethanolamine + CO2. It functions in the pathway phospholipid metabolism; phosphatidylethanolamine biosynthesis; phosphatidylethanolamine from CDP-diacylglycerol: step 2/2. Catalyzes the formation of phosphatidylethanolamine (PtdEtn) from phosphatidylserine (PtdSer). Plays a central role in phospholipid metabolism and in the interorganelle trafficking of phosphatidylserine. Together with psd1 and psd3, responsible for the majority of phosphatidylethanolamine synthesis. Plays a role in lipid droplet biogenesis at the endoplasmic reticulum membrane. The sequence is that of Phosphatidylserine decarboxylase proenzyme 2, mitochondrial from Schizosaccharomyces pombe (strain 972 / ATCC 24843) (Fission yeast).